Reading from the N-terminus, the 263-residue chain is 4-hydroxy-2-oxo-heptane-1,7-dioate aldolase (263 aa).

Histidine 45 (proton acceptor) is an active-site residue. Substrate is bound at residue glutamine 147. Glutamate 149 is a binding site for a divalent metal cation. Substrate contacts are provided by alanine 174 and aspartate 175. Residue aspartate 175 participates in a divalent metal cation binding.

This sequence belongs to the HpcH/HpaI aldolase family. As to quaternary structure, homohexamer; trimer of dimers. Requires a divalent metal cation as cofactor.

The enzyme catalyses 4-hydroxy-2-oxoheptanedioate = succinate semialdehyde + pyruvate. Its pathway is aromatic compound metabolism; 4-hydroxyphenylacetate degradation; pyruvate and succinate semialdehyde from 4-hydroxyphenylacetate: step 7/7. Functionally, catalyzes the reversible retro-aldol cleavage of 4-hydroxy-2-ketoheptane-1,7-dioate (HKHD) to pyruvate and succinic semialdehyde. This is 4-hydroxy-2-oxo-heptane-1,7-dioate aldolase from Salmonella dublin (strain CT_02021853).